A 428-amino-acid polypeptide reads, in one-letter code: Aspartate--tRNA(Asp) ligase (428 aa).

Glutamate 166 contributes to the L-aspartate binding site. The tract at residues 188-191 (QLYK) is aspartate. An L-aspartate-binding site is contributed by arginine 210. ATP-binding positions include 210–212 (RAE), 218–220 (RHL), and glutamate 351. Mg(2+) contacts are provided by glutamate 351 and serine 354. Residues serine 354 and arginine 358 each coordinate L-aspartate. 399 to 402 (GLER) contributes to the ATP binding site.

This sequence belongs to the class-II aminoacyl-tRNA synthetase family. Type 2 subfamily. Homodimer. Requires Mg(2+) as cofactor.

It is found in the cytoplasm. The catalysed reaction is tRNA(Asp) + L-aspartate + ATP = L-aspartyl-tRNA(Asp) + AMP + diphosphate. In terms of biological role, catalyzes the attachment of L-aspartate to tRNA(Asp) in a two-step reaction: L-aspartate is first activated by ATP to form Asp-AMP and then transferred to the acceptor end of tRNA(Asp). In Thermoplasma volcanium (strain ATCC 51530 / DSM 4299 / JCM 9571 / NBRC 15438 / GSS1), this protein is Aspartate--tRNA(Asp) ligase.